We begin with the raw amino-acid sequence, 333 residues long: Protein SEEDLING LETHAL 1, chloroplastic (333 aa).

The N-terminal 55 residues, 1–55, are a transit peptide targeting the chloroplast; that stretch reads MQQEALSFLSSSLPSLHHNFPSLSRLRFNNFPALSFKPNTSSSSSSFFKSPDIPS. Residues 38-67 are disordered; that stretch reads PNTSSSSSSFFKSPDIPSLSSTTTTTTTTE.

The protein belongs to the mTERF family. In terms of assembly, self-interacts. Associates with the plastid-encoded RNA polymerase (PEP) complex. Interacts directly with PTAC7/PAP12, PTAC12/HMR/PAP5 and PTAC14/PAP7. As to expression, expressed in green aerial tissues such as cotyledons, leaves, flowers and siliques, but not in roots.

The protein resides in the plastid. Its subcellular location is the chloroplast stroma. It localises to the chloroplast nucleoid. In terms of biological role, transcription termination factor required for chloroplast gene expression and protein synthesis in chloroplasts. Necessary for chloroplast photosynthetic complexes assembly by modulating the accumulation of photosynthetic proteins. Essential for embryogenesis. In Arabidopsis thaliana (Mouse-ear cress), this protein is Protein SEEDLING LETHAL 1, chloroplastic.